We begin with the raw amino-acid sequence, 301 residues long: Glycine--tRNA ligase alpha subunit (301 aa).

It belongs to the class-II aminoacyl-tRNA synthetase family. In terms of assembly, tetramer of two alpha and two beta subunits.

The protein resides in the cytoplasm. The enzyme catalyses tRNA(Gly) + glycine + ATP = glycyl-tRNA(Gly) + AMP + diphosphate. In Actinobacillus pleuropneumoniae serotype 5b (strain L20), this protein is Glycine--tRNA ligase alpha subunit.